Reading from the N-terminus, the 303-residue chain is RING finger protein 148 (303 aa).

The first 34 residues, 1-34 (MSLLRITSSAHSSASSRLWRLGIFLLLSLPDSKG), serve as a signal peptide directing secretion. N-linked (GlcNAc...) asparagine glycosylation is present at N43. The 103-residue stretch at 65 to 167 (HSPLERVSGV…LKGMELLHLI (103 aa)) folds into the PA domain. A helical membrane pass occupies residues 186–208 (WLSHYIMSLFTFLTATVAYLFLY). Residues 256–297 (CVVCFDIYKPQDVVRILTCKHIFHKACIDPWLLAHRTCPMCK) form an RING-type; atypical zinc finger.

The protein resides in the membrane. The polypeptide is RING finger protein 148 (RNF148) (Bos taurus (Bovine)).